The chain runs to 679 residues: Shutoff protein (679 aa).

Positions 178–232 (LFDYLIGESQDPNDLDSEYKLAFTDEDLPQEGQAEKTKQRETLGAVATFGAVLLS) are binding to host EIF4G. Residues 235–353 (RLFTHPVVIK…ELAGANYAEA (119 aa)) form the RRM domain. 2 positions are modified to phosphotyrosine; by host: Y252 and Y564. The disordered stretch occupies residues 552 to 679 (REKSILKRGG…SLQGTRRESS (128 aa)). The segment covering 661-679 (PRQETAEKESLQGTRRESS) has biased composition (basic and acidic residues).

The protein belongs to the adenoviridae shutoff protein family. As to quaternary structure, monomer. Interacts with hexon protein; this interaction allows chaperoning and trimerization of hexon proteins. Interacts (via N-terminus) with host initiation factor EIF4G (via C-terminus). Interacts (via RRM domain) with viral mRNAs that contain the tripartite leader; this interaction allows ribosome shunting and expression of viral late mRNAs. In terms of processing, might be cleaved by the viral protease. Phosphorylated. Tyrosine phosphorylation enhances preferential binding to tripartite leader mRNAs and allows ribosome shunting. Post-translationally, methylated. Asymmetric dimethylation by host PRMT1 of the Arg/Gly-rich region may regulate shutoff protein binding to hexon and promote the capsid assembly in the nucleus.

It localises to the host cytoplasm. Its function is as follows. Protein that inhibits host translation while promoting late viral translation by ribosome shunting. Blocks host cap-dependent translation by binding to eIF4G, displacing MKNK1 from cap initiation complexes and preventing EIF4E phosphorylation. Binds to the tripartite leader sequence of viral late mRNAs and recruits host eIF4G, PABPC1/poly-A binding protein and 40S ribosomes subunits on viral mRNAs, allowing ribosome shunting and efficient translation of late viral mRNAs even though conventional translation via ribosome scanning from the cap has been shut off in the host cell. During assembly, acts as a chaperone protein that helps hexon proteins assembly into trimers. In Snake adenovirus serotype 1 (SnAdV-1), this protein is Shutoff protein.